Consider the following 1231-residue polypeptide: Cohesin subunit SA-2 (1231 aa).

Met1 bears the N-acetylmethionine mark. The interval 1–75 (MIAAPEIPTD…GSNRMNGHHQ (75 aa)) is disordered. A compositionally biased stretch (basic residues) spans 36–48 (KQGKGKTCKKGKK). Positions 293–378 (FVHRYRDAIA…SRFKDRIVSM (86 aa)) constitute an SCD domain. At Lys607 the chain carries N6-acetyllysine. 4 positions are modified to phosphoserine: Ser1058, Ser1061, Ser1064, and Ser1065. Residues 1062-1087 (GMSSRGSTVRSKKSKPSTGKRKVVEG) are disordered. Over residues 1071–1082 (RSKKSKPSTGKR) the composition is skewed to basic residues. Phosphothreonine is present on Thr1112. A phosphoserine mark is found at Ser1177 and Ser1178.

It belongs to the SCC3 family. In terms of assembly, interacts directly with RAD21 in cohesin complex. Cohesin complexes are composed of a heterodimer between a SMC1 protein (SMC1A or SMC1B) and SMC3, which are attached via their hinge domain, and RAD21 which link them at their heads, and one STAG protein (STAG1, STAG2 or STAG3). In cohesin complexes, STAG2 is mutually exclusive with STAG1 and STAG3. Post-translationally, phosphorylated by PLK1. The large dissociation of cohesin from chromosome arms during prophase is partly due to its phosphorylation.

The protein localises to the nucleus. It is found in the chromosome. Its subcellular location is the centromere. In terms of biological role, component of cohesin complex, a complex required for the cohesion of sister chromatids after DNA replication. The cohesin complex apparently forms a large proteinaceous ring within which sister chromatids can be trapped. At anaphase, the complex is cleaved and dissociates from chromatin, allowing sister chromatids to segregate. The cohesin complex may also play a role in spindle pole assembly during mitosis. The sequence is that of Cohesin subunit SA-2 (Stag2) from Mus musculus (Mouse).